A 271-amino-acid chain; its full sequence is Short-chain dehydrogenase PC-15 (271 aa).

Residues Ile-8, Thr-34, Lys-40, Asp-56, Asn-84, Tyr-148, Lys-152, Val-181, and Thr-183 each contribute to the NADP(+) site. Tyr-148 acts as the Proton acceptor in catalysis. Lys-152 serves as the catalytic Lowers pKa of active site Tyr.

This sequence belongs to the short-chain dehydrogenases/reductases (SDR) family.

The protein operates within secondary metabolite biosynthesis. Functionally, short-chain dehydrogenase; part of the gene cluster that mediates the biosynthesis of the indole diterpenes penitrems. The geranylgeranyl diphosphate (GGPP) synthase penG catalyzes the first step in penitrem biosynthesis via conversion of farnesyl pyrophosphate and isopentyl pyrophosphate into geranylgeranyl pyrophosphate (GGPP). Condensation of indole-3-glycerol phosphate with GGPP by the prenyl transferase penC then forms 3-geranylgeranylindole (3-GGI). Epoxidation by the FAD-dependent monooxygenase penM leads to a epoxidized-GGI that is substrate of the terpene cyclase penB for cyclization to yield paspaline. Paspaline is subsequently converted to 13-desoxypaxilline by the cytochrome P450 monooxygenase penP, the latter being then converted to paxilline by the cytochrome P450 monooxygenase penQ. Paxilline is converted to beta-paxitriol via C-10 ketoreduction by the short-chain dehydrogenase PC-15 which can be monoprenylated at the C-20 by the indole diterpene prenyltransferase penD. A two-step elimination (acetylation and elimination) process performed by the O-acetyltransferase PC-16 and the P.simplicissimum ptmI-ortholog not yet identified in P.crustosum, leads to the production of the prenylated form of penijanthine. The FAD-linked oxidoreductase ptmO then converts the prenylated form of penijanthine into PC-M5 which is in turn transformed into PC-M4 by the aromatic dimethylallyltransferase PC-22. A series of oxidation steps involving 4 cytochrome P450 monooxygenases (PC-21, PC-05, PC-23, PC-20) and a FAD-dependent monooxygenase (PC-14) are required for the transformation of PC-M4 to penitrems A and E. Synthesis of these final products is proposed to proceed via penitrems D and C (PC-21, PC-05, PC-14) and penitrems B and F (PC-21, PC-05, PC-14, PC-23). The polypeptide is Short-chain dehydrogenase PC-15 (Penicillium crustosum (Blue mold fungus)).